The chain runs to 501 residues: UDP-N-acetylmuramate--L-alanine ligase (501 aa).

130–136 (GTHGKTS) contacts ATP.

The protein belongs to the MurCDEF family.

It is found in the cytoplasm. It catalyses the reaction UDP-N-acetyl-alpha-D-muramate + L-alanine + ATP = UDP-N-acetyl-alpha-D-muramoyl-L-alanine + ADP + phosphate + H(+). The protein operates within cell wall biogenesis; peptidoglycan biosynthesis. Functionally, cell wall formation. This is UDP-N-acetylmuramate--L-alanine ligase from Nocardia farcinica (strain IFM 10152).